The chain runs to 125 residues: Holo-[acyl-carrier-protein] synthase (125 aa).

Residues Asp-8 and Glu-57 each contribute to the Mg(2+) site.

Belongs to the P-Pant transferase superfamily. AcpS family. It depends on Mg(2+) as a cofactor.

It is found in the cytoplasm. The enzyme catalyses apo-[ACP] + CoA = holo-[ACP] + adenosine 3',5'-bisphosphate + H(+). Functionally, transfers the 4'-phosphopantetheine moiety from coenzyme A to a Ser of acyl-carrier-protein. This Nitrosomonas europaea (strain ATCC 19718 / CIP 103999 / KCTC 2705 / NBRC 14298) protein is Holo-[acyl-carrier-protein] synthase.